Consider the following 33-residue polypeptide: Cecropin-B (33 aa).

The residue at position 21 (Lys21) is a 5-hydroxylysine.

As to quaternary structure, monomer. As to expression, hemolymph.

It is found in the secreted. Cecropins have lytic and antibacterial activity against several Gram-positive and Gram-negative bacteria. Also has activity against fungi. In Heliothis virescens (Tobacco budworm moth), this protein is Cecropin-B.